A 483-amino-acid chain; its full sequence is Keratin, type II cytoskeletal 8 (483 aa).

The segment covering 1–25 (MSVRVTQKSYKMSTSGPRAFSSRSF) has biased composition (polar residues). The interval 1–43 (MSVRVTQKSYKMSTSGPRAFSSRSFTSGPGARISSSSFSRVGS) is disordered. The segment at 1-90 (MSVRVTQKSY…DPNIQAVRTQ (90 aa)) is head. Phosphoserine; by PKC/PRKCE is present on Ser-9. A Glycyl lysine isopeptide (Lys-Gly) (interchain with G-Cter in SUMO2) cross-link involves residue Lys-11. Residues Ser-13, Ser-15, Ser-21, and Ser-22 each carry the phosphoserine modification. At Arg-23 the chain carries Omega-N-methylarginine. Phosphoserine; by PKC/PRKCE is present on Ser-24. Phosphoserine is present on Ser-24. At Thr-26 the chain carries Phosphothreonine. Low complexity predominate over residues 26 to 43 (TSGPGARISSSSFSRVGS). At Ser-27 the chain carries Phosphoserine. Arg-32 is modified (omega-N-methylarginine). Residues Ser-34, Ser-37, and Ser-39 each carry the phosphoserine modification. Arg-40 carries the post-translational modification Omega-N-methylarginine. Residues Ser-43, Ser-44, and Ser-47 each carry the phosphoserine modification. Arg-49 carries the post-translational modification Asymmetric dimethylarginine; alternate. Arg-49 carries the omega-N-methylarginine; alternate modification. Ser-51 bears the Phosphoserine mark. The tract at residues 91–126 (EKEQIKTLNNKFASFIDKVRFLEQQNKMLETKWSLL) is coil 1A. The region spanning 91–402 (EKEQIKTLNN…KLLEGEESRL (312 aa)) is the IF rod domain. An N6-malonyllysine modification is found at Lys-101. Residues Lys-122 and Lys-130 each participate in a glycyl lysine isopeptide (Lys-Gly) (interchain with G-Cter in SUMO2) cross-link. The interval 127–143 (QQQKTSRSNMDNMFESY) is linker 1. The interval 144-235 (INNLRRQLEA…QIHEEEIREL (92 aa)) is coil 1B. Lys-197 participates in a covalent cross-link: Glycyl lysine isopeptide (Lys-Gly) (interchain with G-Cter in SUMO1); alternate. Lys-197 is covalently cross-linked (Glycyl lysine isopeptide (Lys-Gly) (interchain with G-Cter in SUMO2); alternate). Lys-207 carries the post-translational modification N6-acetyllysine. The tract at residues 236 to 259 (QSQISDTSVVLSMDNSRSLDMDSI) is linker 12. Ser-253, Ser-258, and Ser-274 each carry phosphoserine. A coil 2 region spans residues 260 to 398 (IAEVRAQYEE…ATYRKLLEGE (139 aa)). A necessary for interaction with PNN region spans residues 261–382 (AEVRAQYEEI…EYQELMNVKL (122 aa)). Residue Lys-285 forms a Glycyl lysine isopeptide (Lys-Gly) (interchain with G-Cter in SUMO2) linkage. Lys-295 is covalently cross-linked (Glycyl lysine isopeptide (Lys-Gly) (interchain with G-Cter in SUMO2); alternate). At Lys-295 the chain carries N6-acetyllysine; alternate. A Glycyl lysine isopeptide (Lys-Gly) (interchain with G-Cter in SUMO2) cross-link involves residue Lys-304. Lys-325 is covalently cross-linked (Glycyl lysine isopeptide (Lys-Gly) (interchain with G-Cter in SUMO2); alternate). Lys-325 carries the post-translational modification N6-acetyllysine; alternate. A Glycyl lysine isopeptide (Lys-Gly) (interchain with G-Cter in SUMO2) cross-link involves residue Lys-393. The segment at 399 to 483 (ESRLESGMQN…VSESSDIMSK (85 aa)) is tail. Ser-400, Ser-404, Ser-410, Ser-417, Ser-424, Ser-426, and Ser-432 each carry phosphoserine. Lys-472 participates in a covalent cross-link: Glycyl lysine isopeptide (Lys-Gly) (interchain with G-Cter in SUMO1); alternate. Lys-472 is covalently cross-linked (Glycyl lysine isopeptide (Lys-Gly) (interchain with G-Cter in SUMO2); alternate). 4 positions are modified to phosphoserine: Ser-475, Ser-477, Ser-478, and Ser-482.

This sequence belongs to the intermediate filament family. In terms of assembly, heterotetramer of two type I and two type II keratins. Forms a heterodimer with KRT18. Associates with KRT20. Interacts with PNN. When associated with KRT19, interacts with DMD. Interacts with TCHP. Interacts with APEX1. Interacts with GPER1. Interacts with EPPK1. Interacts with PKP1 and PKP2. Post-translationally, O-glycosylated. O-GlcNAcylation at multiple sites increases solubility, and decreases stability by inducing proteasomal degradation. O-glycosylated (O-GlcNAcylated), in a cell cycle-dependent manner. Expressed in cardiac and striated muscle. Expressed at Z-lines within the muscle fibers and at Z-line and M-line domains at costameres at the sarcolemmal membrane (at protein level). Observed in coagulating gland, bladder, salivary gland, kidney, spleen, thymus, lung and heart. Also observed in ventral prostate, seminal vesicle and liver where expression increases following castration.

It localises to the cytoplasm. Its subcellular location is the nucleus. It is found in the nucleoplasm. The protein localises to the nucleus matrix. Together with KRT19, helps to link the contractile apparatus to dystrophin at the costameres of striated muscle. The chain is Keratin, type II cytoskeletal 8 (Krt8) from Rattus norvegicus (Rat).